The chain runs to 467 residues: Cysteine--tRNA ligase (467 aa).

Position 28 (cysteine 28) interacts with Zn(2+). The 'HIGH' region signature appears at 30 to 40 (PTVYNYIHVGN). Residues cysteine 212, histidine 237, and glutamate 241 each contribute to the Zn(2+) site. The short motif at 269–273 (KMSKS) is the 'KMSKS' region element. Lysine 272 contributes to the ATP binding site.

It belongs to the class-I aminoacyl-tRNA synthetase family. Monomer. The cofactor is Zn(2+).

The protein resides in the cytoplasm. It carries out the reaction tRNA(Cys) + L-cysteine + ATP = L-cysteinyl-tRNA(Cys) + AMP + diphosphate. This chain is Cysteine--tRNA ligase, found in Oenococcus oeni (strain ATCC BAA-331 / PSU-1).